Here is a 24-residue protein sequence, read N- to C-terminus: Prokineticin 1-like protein (24 aa).

Cys7 and Cys19 are disulfide-bonded.

Expressed by the skin glands.

It is found in the secreted. Functionally, stimulates insulin secretion by BRIN-BD11 cells in vitro. The sequence is that of Prokineticin 1-like protein from Pelophylax saharicus (Sahara frog).